Consider the following 198-residue polypeptide: ATP synthase subunit b (198 aa).

The helical transmembrane segment at 49–67 threads the bilayer; sequence IWKWANFLILAGGLGYLVG.

Belongs to the ATPase B chain family. F-type ATPases have 2 components, F(1) - the catalytic core - and F(0) - the membrane proton channel. F(1) has five subunits: alpha(3), beta(3), gamma(1), delta(1), epsilon(1). F(0) has three main subunits: a(1), b(2) and c(10-14). The alpha and beta chains form an alternating ring which encloses part of the gamma chain. F(1) is attached to F(0) by a central stalk formed by the gamma and epsilon chains, while a peripheral stalk is formed by the delta and b chains.

It is found in the cell inner membrane. Functionally, f(1)F(0) ATP synthase produces ATP from ADP in the presence of a proton or sodium gradient. F-type ATPases consist of two structural domains, F(1) containing the extramembraneous catalytic core and F(0) containing the membrane proton channel, linked together by a central stalk and a peripheral stalk. During catalysis, ATP synthesis in the catalytic domain of F(1) is coupled via a rotary mechanism of the central stalk subunits to proton translocation. Component of the F(0) channel, it forms part of the peripheral stalk, linking F(1) to F(0). The chain is ATP synthase subunit b from Solibacter usitatus (strain Ellin6076).